The following is a 210-amino-acid chain: Ion-translocating oxidoreductase complex subunit G (210 aa).

A helical transmembrane segment spans residues 9–29 (SLVLALFAIAATALVTITYAL). The residue at position 176 (Thr176) is an FMN phosphoryl threonine.

It belongs to the RnfG family. As to quaternary structure, the complex is composed of six subunits: RnfA, RnfB, RnfC, RnfD, RnfE and RnfG. The cofactor is FMN.

The protein resides in the cell inner membrane. Part of a membrane-bound complex that couples electron transfer with translocation of ions across the membrane. This Aliivibrio fischeri (strain MJ11) (Vibrio fischeri) protein is Ion-translocating oxidoreductase complex subunit G.